Here is a 329-residue protein sequence, read N- to C-terminus: DNA-directed RNA polymerase subunit alpha (329 aa).

Residues 1–235 (MQGSVTEFLK…EQLEAFVDLR (235 aa)) form an alpha N-terminal domain (alpha-NTD) region. The segment at 249–329 (FDPILLRPVD…NWPPASIADE (81 aa)) is alpha C-terminal domain (alpha-CTD).

Belongs to the RNA polymerase alpha chain family. Homodimer. The RNAP catalytic core consists of 2 alpha, 1 beta, 1 beta' and 1 omega subunit. When a sigma factor is associated with the core the holoenzyme is formed, which can initiate transcription.

The enzyme catalyses RNA(n) + a ribonucleoside 5'-triphosphate = RNA(n+1) + diphosphate. DNA-dependent RNA polymerase catalyzes the transcription of DNA into RNA using the four ribonucleoside triphosphates as substrates. In Sodalis glossinidius (strain morsitans), this protein is DNA-directed RNA polymerase subunit alpha.